The following is a 232-amino-acid chain: Large ribosomal subunit protein uL16m (232 aa).

The transit peptide at 1-41 directs the protein to the mitochondrion; that stretch reads MFPYLTRMNLSIKMGGLTLKESSPNAFLNNTTIARRFKHEY.

It belongs to the universal ribosomal protein uL16 family. In terms of assembly, component of the mitochondrial large ribosomal subunit (mt-LSU). Mature yeast 74S mitochondrial ribosomes consist of a small (37S) and a large (54S) subunit. The 37S small subunit contains a 15S ribosomal RNA (15S mt-rRNA) and 34 different proteins. The 54S large subunit contains a 21S rRNA (21S mt-rRNA) and 46 different proteins.

It is found in the mitochondrion. Component of the mitochondrial ribosome (mitoribosome), a dedicated translation machinery responsible for the synthesis of mitochondrial genome-encoded proteins, including at least some of the essential transmembrane subunits of the mitochondrial respiratory chain. The mitoribosomes are attached to the mitochondrial inner membrane and translation products are cotranslationally integrated into the membrane. The chain is Large ribosomal subunit protein uL16m (MRPL16) from Saccharomyces cerevisiae (strain ATCC 204508 / S288c) (Baker's yeast).